We begin with the raw amino-acid sequence, 186 residues long: dCTP deaminase (186 aa).

DCTP is bound at residue 107–112 (KSTYAR). Catalysis depends on glutamate 133, which acts as the Proton donor/acceptor. DCTP-binding residues include glutamine 152, tyrosine 166, and glutamine 176.

It belongs to the dCTP deaminase family. Homotrimer.

It carries out the reaction dCTP + H2O + H(+) = dUTP + NH4(+). Its pathway is pyrimidine metabolism; dUMP biosynthesis; dUMP from dCTP (dUTP route): step 1/2. Functionally, catalyzes the deamination of dCTP to dUTP. The polypeptide is dCTP deaminase (Campylobacter jejuni subsp. doylei (strain ATCC BAA-1458 / RM4099 / 269.97)).